Reading from the N-terminus, the 393-residue chain is 1-deoxy-D-xylulose 5-phosphate reductoisomerase (393 aa).

NADPH contacts are provided by threonine 10, glycine 11, serine 12, isoleucine 13, arginine 37, glutamine 38, and asparagine 124. Residue lysine 125 coordinates 1-deoxy-D-xylulose 5-phosphate. Glutamate 126 serves as a coordination point for NADPH. Aspartate 150 is a Mn(2+) binding site. Positions 151, 152, 179, and 202 each coordinate 1-deoxy-D-xylulose 5-phosphate. Position 152 (glutamate 152) interacts with Mn(2+). Glycine 208 contributes to the NADPH binding site. The 1-deoxy-D-xylulose 5-phosphate site is built by serine 215, asparagine 220, lysine 221, and glutamate 224. Position 224 (glutamate 224) interacts with Mn(2+).

Belongs to the DXR family. Requires Mg(2+) as cofactor. It depends on Mn(2+) as a cofactor.

The catalysed reaction is 2-C-methyl-D-erythritol 4-phosphate + NADP(+) = 1-deoxy-D-xylulose 5-phosphate + NADPH + H(+). Its pathway is isoprenoid biosynthesis; isopentenyl diphosphate biosynthesis via DXP pathway; isopentenyl diphosphate from 1-deoxy-D-xylulose 5-phosphate: step 1/6. In terms of biological role, catalyzes the NADPH-dependent rearrangement and reduction of 1-deoxy-D-xylulose-5-phosphate (DXP) to 2-C-methyl-D-erythritol 4-phosphate (MEP). The sequence is that of 1-deoxy-D-xylulose 5-phosphate reductoisomerase from Cupriavidus necator (strain ATCC 17699 / DSM 428 / KCTC 22496 / NCIMB 10442 / H16 / Stanier 337) (Ralstonia eutropha).